We begin with the raw amino-acid sequence, 1175 residues long: Structural maintenance of chromosomes protein 2-1 (1175 aa).

In terms of domain architecture, Zinc-hook spans 2–1161; it reads HIKEICLEGF…NVLFRTKFVD (1160 aa). 32 to 39 contributes to the ATP binding site; it reads GLNGSGKS. A coiled-coil region spans residues 172–508; the sequence is RMYENKKEAA…AQLANFQFTY (337 aa). One can recognise an SMC hinge domain in the interval 518 to 638; sequence SKVKGVVAKL…KTTDVAKEVA (121 aa). Residues 673 to 1028 are a coiled coil; sequence LRKLHDLAEA…ELDEKKKETL (356 aa).

This sequence belongs to the SMC family. SMC2 subfamily. In terms of assembly, forms a heterodimer with SMC4. Component of the condensin complex, which contains the SMC2 and SMC4 heterodimer, and three non SMC subunits that probably regulate the complex: CAPH, CAPD2 and CAPG. As to expression, highly expressed in roots and young floral buds.

The protein localises to the nucleus. Central component of the condensin complex, a complex required for conversion of interphase chromatin into mitotic-like condense chromosomes. The condensin complex probably introduces positive supercoils into relaxed DNA in the presence of type I topoisomerases and converts nicked DNA into positive knotted forms in the presence of type II topoisomerases. Also involved in chromosome segregation in meiosis. This chain is Structural maintenance of chromosomes protein 2-1 (SMC2-1), found in Arabidopsis thaliana (Mouse-ear cress).